A 241-amino-acid chain; its full sequence is MATVSMRDMLQAGVHFGHQTRYWNPKMKPFIFGARNKVHIINLEKTVPMFNEALVELNKIASRKGKILFVGTKRSAVEAVKEAAESCDQFYVNHRWLGGMLTNWKTVRQSIKRLKDLESQSQDGTFDKLTKKEALMRSRELGKLENSLGGIKDMGGLPDALFVIDAEHEHIAIKEANNLGIPVFAIVDTNSDPDGIDYIIPGNDDAIRAVKLYLTAAATAVREGRSQDLAVQAEEGLVEAE.

Belongs to the universal ribosomal protein uS2 family.

This is Small ribosomal subunit protein uS2 from Proteus mirabilis (strain HI4320).